The following is a 228-amino-acid chain: 2-C-methyl-D-erythritol 4-phosphate cytidylyltransferase (228 aa).

The protein belongs to the IspD/TarI cytidylyltransferase family. IspD subfamily.

The catalysed reaction is 2-C-methyl-D-erythritol 4-phosphate + CTP + H(+) = 4-CDP-2-C-methyl-D-erythritol + diphosphate. Its pathway is isoprenoid biosynthesis; isopentenyl diphosphate biosynthesis via DXP pathway; isopentenyl diphosphate from 1-deoxy-D-xylulose 5-phosphate: step 2/6. Functionally, catalyzes the formation of 4-diphosphocytidyl-2-C-methyl-D-erythritol from CTP and 2-C-methyl-D-erythritol 4-phosphate (MEP). This chain is 2-C-methyl-D-erythritol 4-phosphate cytidylyltransferase, found in Dechloromonas aromatica (strain RCB).